Reading from the N-terminus, the 476-residue chain is Sulfate adenylyltransferase subunit 1 (476 aa).

The tr-type G domain occupies 25–241 (KSLLRFLTCG…LETVEVQRVV (217 aa)). Positions 34–41 (GSVDDGKS) are G1. 34-41 (GSVDDGKS) provides a ligand contact to GTP. Positions 92–96 (GITID) are G2. A G3 region spans residues 113-116 (DTPG). GTP-binding positions include 113–117 (DTPGH) and 168–171 (NKMD). A G4 region spans residues 168-171 (NKMD). The G5 stretch occupies residues 206–208 (SAL).

The protein belongs to the TRAFAC class translation factor GTPase superfamily. Classic translation factor GTPase family. CysN/NodQ subfamily. As to quaternary structure, heterodimer composed of CysD, the smaller subunit, and CysN.

It catalyses the reaction sulfate + ATP + H(+) = adenosine 5'-phosphosulfate + diphosphate. Its pathway is sulfur metabolism; hydrogen sulfide biosynthesis; sulfite from sulfate: step 1/3. Functionally, with CysD forms the ATP sulfurylase (ATPS) that catalyzes the adenylation of sulfate producing adenosine 5'-phosphosulfate (APS) and diphosphate, the first enzymatic step in sulfur assimilation pathway. APS synthesis involves the formation of a high-energy phosphoric-sulfuric acid anhydride bond driven by GTP hydrolysis by CysN coupled to ATP hydrolysis by CysD. The chain is Sulfate adenylyltransferase subunit 1 from Erwinia tasmaniensis (strain DSM 17950 / CFBP 7177 / CIP 109463 / NCPPB 4357 / Et1/99).